Here is a 416-residue protein sequence, read N- to C-terminus: Keratin, type I cuticular Ha1 (416 aa).

Residues 1–56 (MPYNFCLPSLSCRTSCSSRPCVPPSCHSCTLPGACNIPANVSNCNWFCEGSFNGSE) are head. The region spanning 56 to 367 (EKETMQFLND…SLLESEDCNL (312 aa)) is the IF rod domain. The segment at 57 to 91 (KETMQFLNDRLASYLEKVRQLERDNAELENLIRER) is coil 1A. The tract at residues 92–102 (SQQQEPLLCPS) is linker 1. Positions 103 to 203 (YQSYFKTIEE…HEQEVNTLRC (101 aa)) are coil 1B. The interval 204-219 (QLGDRLNVEVDAAPTV) is linker 12. A coil 2 region spans residues 220–363 (DLNRVLNETR…NTYRSLLESE (144 aa)). Positions 364-416 (DCNLPSNPCATTNACSKPIGPCLSNPCTSCVPPAPCTPCAPRPRCGPCNSFVR) are tail.

This sequence belongs to the intermediate filament family. As to expression, present in scalp but not in hairless skin. Abundantly expressed in the differentiating cortex of growing (anagen) hair. Expression is restricted to the keratinocytes of the hair cortex and is absent from inner root sheath and medulla.

This chain is Keratin, type I cuticular Ha1 (KRT31), found in Homo sapiens (Human).